Reading from the N-terminus, the 660-residue chain is Protein translocase subunit SecA 2 (660 aa).

ATP is bound by residues Q113, 131-135 (GEGKT), and D539.

This sequence belongs to the SecA family. As to quaternary structure, monomer and homodimer. Part of the essential Sec protein translocation apparatus which comprises SecA, SecYEG and auxiliary proteins SecDF-YajC and YidC.

Its subcellular location is the cell inner membrane. It is found in the cytoplasm. It catalyses the reaction ATP + H2O + cellular proteinSide 1 = ADP + phosphate + cellular proteinSide 2.. In terms of biological role, part of the Sec protein translocase complex. Interacts with the SecYEG preprotein conducting channel. Has a central role in coupling the hydrolysis of ATP to the transfer of proteins into and across the cell membrane, serving both as a receptor for the preprotein-SecB complex and as an ATP-driven molecular motor driving the stepwise translocation of polypeptide chains across the membrane. In Bordetella avium (strain 197N), this protein is Protein translocase subunit SecA 2.